The following is a 150-amino-acid chain: Heat shock protein beta-3 (150 aa).

Residues 47–150 enclose the sHSP domain; sequence KTRAAQSPPV…VEVKDPVGTK (104 aa).

This sequence belongs to the small heat shock protein (HSP20) family.

The protein localises to the cytoplasm. It localises to the nucleus. Inhibitor of actin polymerization. This chain is Heat shock protein beta-3 (HSPB3), found in Homo sapiens (Human).